Reading from the N-terminus, the 328-residue chain is MSAAALLAPAPAPAGAPPAPEYYPEEDEELESAEDDERSCRGRESDEDTEDASETDLAKHDEEDFVEMKEQMYQDKLASLKRQLQQLQEGTLQEYQKRMKKLDQQYKERIRNAELFLQLETEQVERNYIKEKKAAVKEFEDKKVELKENLIAELEEKKKMIENEKLTMELTGDSMEVKPIMTRKLRRRPNDPVPIPDKRRKPAPAQLNYLLTDEQIMEDLRTLNKLKSPKRPASPSSPEHLPTTPAESPAQRFEARIEDGKLYYDKRWYHKSQAIYLESKDNQKLSCVISSVGANEIWVRKTSDSTKMRIYLGQLQRGLFVIRRRSAA.

Residues 1-64 (MSAAALLAPA…TDLAKHDEED (64 aa)) form a disordered region. The residue at position 2 (Ser2) is an N-acetylserine. The segment at 2–170 (SAAALLAPAP…IENEKLTMEL (169 aa)) is mediates interaction with USP17L2. The span at 10 to 21 (APAPAGAPPAPE) shows a compositional bias: pro residues. Composition is skewed to acidic residues over residues 23 to 37 (YPEEDEELESAEDDE) and 45 to 54 (SDEDTEDASE). Residues Ser32 and Ser45 each carry the phosphoserine modification. Residue Thr49 is modified to Phosphothreonine. Ser53 is modified (phosphoserine). The stretch at 64-171 (DFVEMKEQMY…ENEKLTMELT (108 aa)) forms a coiled coil. Glycyl lysine isopeptide (Lys-Gly) (interchain with G-Cter in SUMO2) cross-links involve residues Lys69, Lys178, and Lys201. The interval 226–252 (LKSPKRPASPSSPEHLPTTPAESPAQR) is disordered. Phosphoserine occurs at positions 228, 234, and 237. Phosphothreonine is present on Thr244.

Belongs to the SDS3 family. In terms of assembly, homodimer. Component of the SIN3 histone deacetylase (HDAC) corepressor complex. Interacts with SIN3A. Interaction with SIN3B enhances the interaction between SIN3B and HDAC1 to form a complex. Interacts with HCFC1. Component of a mSin3A corepressor complex that contains SIN3A, SAP130, SUDS3/SAP45, ARID4B/SAP180, HDAC1 and HDAC2. Interacts with USP17L2; the interaction is direct. Interacts with FOXK2. Post-translationally, polyubiquitinated. 'Lys-63'-polyubiquitinated SUDS3 positively regulates histone deacetylation. Regulated through deubiquitination by USP17L2/USP17 that cleaves 'Lys-63'-linked ubiquitin chains.

Its subcellular location is the nucleus. Functionally, regulatory protein which represses transcription and augments histone deacetylase activity of HDAC1. May have a potential role in tumor suppressor pathways through regulation of apoptosis. May function in the assembly and/or enzymatic activity of the mSin3A corepressor complex or in mediating interactions between the complex and other regulatory complexes. The sequence is that of Sin3 histone deacetylase corepressor complex component SDS3 (SUDS3) from Bos taurus (Bovine).